Reading from the N-terminus, the 340-residue chain is Protein-arginine kinase (340 aa).

The Phosphagen kinase C-terminal domain occupies Val-21–Ala-242. Residues Ser-24–Arg-28, His-79, Arg-113, Arg-164–Met-168, and Arg-195–Glu-200 each bind ATP.

It belongs to the ATP:guanido phosphotransferase family.

The enzyme catalyses L-arginyl-[protein] + ATP = N(omega)-phospho-L-arginyl-[protein] + ADP + H(+). Catalyzes the specific phosphorylation of arginine residues in proteins. This chain is Protein-arginine kinase, found in Listeria monocytogenes serotype 4b (strain CLIP80459).